The chain runs to 630 residues: Sodium-dependent serotonin transporter (630 aa).

Topologically, residues 1–87 (METTPLNSQK…ERETWGKKVD (87 aa)) are cytoplasmic. The disordered stretch occupies residues 31-59 (VPTPGDKVESGQISNGYSAVPSPGAGDDT). Y47 bears the Phosphotyrosine mark. The chain crosses the membrane as a helical span at residues 88–112 (FLLSVIGYAVDLGNVWRFPYICYQN). Residues G94, A96, V97, D98, and N101 each contribute to the Na(+) site. D98 is a binding site for serotonin. The Extracellular portion of the chain corresponds to 113–115 (GGG). The helical transmembrane segment at 116–135 (AFLIPYTIMAIFGGIPLFYM) threads the bilayer. The Cytoplasmic portion of the chain corresponds to 136–160 (ELALGQYHRNGCISIWRKICPIFKG). Y142 bears the Phosphotyrosine mark. The chain crosses the membrane as a helical span at residues 161–186 (IGYAICIIAFYIASYYNTIMAWALYY). Residues 187-252 (LISSFTDQLP…KGLQDLGGIS (66 aa)) are Extracellular-facing. C200 and C209 are joined by a disulfide. N-linked (GlcNAc...) asparagine glycosylation is found at N208 and N217. The chain crosses the membrane as a helical span at residues 253–271 (WQLALCIMLIFTVIYFSIW). The Cytoplasmic portion of the chain corresponds to 272 to 277 (KGVKTS). Phosphothreonine is present on T276. A helical membrane pass occupies residues 278–297 (GKVVWVTATFPYIILSVLLV). Over 298–324 (RGATLPGAWRGVLFYLKPNWQKLLETG) the chain is Extracellular. Residues 325–347 (VWIDAAAQIFFSLGPGFGVLLAF) traverse the membrane as a helical segment. S336 contributes to the Na(+) binding site. Over 348–360 (ASYNKFNNNCYQD) the chain is Cytoplasmic. The helical transmembrane segment at 361–380 (ALVTSVVNCMTSFVSGFVIF) threads the bilayer. N368 contacts Na(+). The Extracellular portion of the chain corresponds to 381–421 (TVLGYMAEMRNEDVSEVAKDAGPSLLFITYAEAIANMPAST). Residues 422 to 443 (FFAIIFFLMLITLGLDSTFAGL) form a helical membrane-spanning segment. Residues L434, D437, and S438 each coordinate Na(+). A serotonin-binding site is contributed by T439. Over 444–463 (EGVITAVLDEFPHIWAKRRE) the chain is Cytoplasmic. Residues 464 to 483 (WFVLAVVITCFFGSLVTLTF) traverse the membrane as a helical segment. Over 484–494 (GGAYVVKLLEE) the chain is Extracellular. Serotonin is bound by residues E494 and Y495. A helical membrane pass occupies residues 495–516 (YATGPAVLTVALIEAVAVSWFY). The Cytoplasmic portion of the chain corresponds to 517–538 (GITQFCRDVKEMLGFSPGWFWR). Residues 539–558 (ICWVAISPLFLLFIICSFLM) traverse the membrane as a helical segment. Positions 556 and 559 each coordinate serotonin. At 559–574 (SPPQLRLFQYNYPHWS) the chain is on the extracellular side. A helical transmembrane segment spans residues 575 to 595 (IILGYCIGTSSFVCIPTYIAY). The Cytoplasmic portion of the chain corresponds to 596–630 (RLISTPGTFKERIIKSITPETPTEIPCGDVRLNAV). The interval 616-624 (TPTEIPCGD) is interaction with RAB4A.

This sequence belongs to the sodium:neurotransmitter symporter (SNF) (TC 2.A.22) family. SLC6A4 subfamily. In terms of assembly, monomer or homooligomer. Interacts (via C-terminus) with SCAMP2; the interaction is direct and retains transporter molecules intracellularly. Interacts with filamentous actin and STX1A. Interacts (via the N-terminus) with STX1A (via the H3 domain); this interaction regulates SLC4A6 channel conductance. Interacts with SEC23A, SEC24C and PATJ. Interacts with NOS1; the interaction may diminish the cell surface localization of SERT in the brain and, correspondingly, reduce serotonin reuptake. Interacts with TGFB1I1. Interacts with ITGAV:ITGB3. Interacts (via C-terminus) with ITGB3; this interaction regulates SLC6A4 trafficking. Phosphorylation at Thr-276 increases 5-HT uptake and is required for cGMP-mediated SERT regulation.

It localises to the cell membrane. It is found in the endomembrane system. Its subcellular location is the endosome membrane. The protein resides in the synapse. The protein localises to the cell junction. It localises to the focal adhesion. It is found in the cell projection. Its subcellular location is the neuron projection. The catalysed reaction is serotonin(out) + K(+)(in) + Na(+)(out) + H(+)(in) = serotonin(in) + K(+)(out) + Na(+)(in) + H(+)(out). In terms of biological role, serotonin transporter that cotransports serotonin with one Na(+) ion in exchange for one K(+) ion and possibly one proton in an overall electroneutral transport cycle. Transports serotonin across the plasma membrane from the extracellular compartment to the cytosol thus limiting serotonin intercellular signaling. Essential for serotonin homeostasis in the central nervous system. In the developing somatosensory cortex, acts in glutamatergic neurons to control serotonin uptake and its trophic functions accounting for proper spatial organization of cortical neurons and elaboration of sensory circuits. In the mature cortex, acts primarily in brainstem raphe neurons to mediate serotonin uptake from the synaptic cleft back into the pre-synaptic terminal thus terminating serotonin signaling at the synapse. Modulates mucosal serotonin levels in the gastrointestinal tract through uptake and clearance of serotonin in enterocytes. Required for enteric neurogenesis and gastrointestinal reflexes. Regulates blood serotonin levels by ensuring rapid high affinity uptake of serotonin from plasma to platelets, where it is further stored in dense granules via vesicular monoamine transporters and then released upon stimulation. Mechanistically, the transport cycle starts with an outward-open conformation having Na1(+) and Cl(-) sites occupied. The binding of a second extracellular Na2(+) ion and serotonin substrate leads to structural changes to outward-occluded to inward-occluded to inward-open, where the Na2(+) ion and serotonin are released into the cytosol. Binding of intracellular K(+) ion induces conformational transitions to inward-occluded to outward-open and completes the cycle by releasing K(+) possibly together with a proton bound to Asp-98 into the extracellular compartment. Na1(+) and Cl(-) ions remain bound throughout the transport cycle. Additionally, displays serotonin-induced channel-like conductance for monovalent cations, mainly Na(+) ions. The channel activity is uncoupled from the transport cycle and may contribute to the membrane resting potential or excitability. The polypeptide is Sodium-dependent serotonin transporter (SLC6A4) (Macaca mulatta (Rhesus macaque)).